A 371-amino-acid polypeptide reads, in one-letter code: tRNA-specific 2-thiouridylase MnmA (371 aa).

Residues Gly16–Ser23 and Met42 each bind ATP. The interval Asn102–Asp104 is interaction with target base in tRNA. The active-site Nucleophile is Cys107. Cys107 and Cys204 are oxidised to a cystine. Gly132 contributes to the ATP binding site. Residues Lys154–Gln156 are interaction with tRNA. Cys204 (cysteine persulfide intermediate) is an active-site residue. The segment at Arg316 to Tyr317 is interaction with tRNA.

Belongs to the MnmA/TRMU family.

The protein localises to the cytoplasm. The catalysed reaction is S-sulfanyl-L-cysteinyl-[protein] + uridine(34) in tRNA + AH2 + ATP = 2-thiouridine(34) in tRNA + L-cysteinyl-[protein] + A + AMP + diphosphate + H(+). Its function is as follows. Catalyzes the 2-thiolation of uridine at the wobble position (U34) of tRNA, leading to the formation of s(2)U34. In Shewanella halifaxensis (strain HAW-EB4), this protein is tRNA-specific 2-thiouridylase MnmA.